The sequence spans 369 residues: MEKGVQERVPHAKPPFTLSQIKKVVPPHCFHRSLLRSFSYLLSDLAFVSLFFYLAIAYFPLLPHPFPYIAWPLYWIFQGCSLTGVWVIAHECGHHAFSDYQLIDDIVGLFFHSALLVPYFSWKYSHRRHHSNTGSLERDEVFVPKPKSQIPWYLKYFNNPPGRLISLIGTLTLGWPLYLAFNMSGRPYDRFACHYDPYSPIFTKREWIQVYISDAGILGMAFMLYRIGVEKGSFWVMRIYGIPLVIVNGFLVLITYLQHTHPALPHYESSEWDWLRGALATVDRDYGVLNRVFHNITDTHVVHHLFSTMPHYHAKEATEAVKPVLGEYYRLDRTPVLKAIWREAKECVYVEPDEDADSDKGVVWYRKKL.

2 helical membrane passes run 41–61 (LLSD…YFPL) and 69–89 (IAWP…WVIA). A Histidine box-1 motif is present at residues 90-94 (HECGH). The helical transmembrane segment at 102–122 (LIDDIVGLFFHSALLVPYFSW) threads the bilayer. The Histidine box-2 signature appears at 126-130 (HRRHH). Transmembrane regions (helical) follow at residues 164 to 184 (LISL…FNMS), 207 to 227 (WIQV…LYRI), and 234 to 254 (FWVM…LVLI). A Histidine box-3 motif is present at residues 300–304 (HVVHH).

This sequence belongs to the fatty acid desaturase type 1 family.

It localises to the membrane. Its pathway is lipid metabolism; polyunsaturated fatty acid biosynthesis. Its function is as follows. Delta(12)-fatty acid desaturase producing in a heterologous system linoleic acid (18:2(9Z,12Z)) and to a lower extent hexadecadienoic acid (16:2(9Z,12Z)). In Trichosanthes kirilowii (Chinese snake gourd), this protein is Delta(12)-oleate desaturase.